The chain runs to 86 residues: Weak toxin 3 (86 aa).

The first 23 residues, 1 to 23 (MKTLLLTLVVVTIVCLDLGYTLT), serve as a signal peptide directing secretion. Disulfide bonds link Cys-24/Cys-45, Cys-27/Cys-32, Cys-38/Cys-63, Cys-67/Cys-78, and Cys-79/Cys-84.

It belongs to the three-finger toxin family. Ancestral subfamily. Orphan group II sub-subfamily. Expressed by the venom gland.

It localises to the secreted. Its function is as follows. Binds with low affinity to muscular (alpha-1-beta-1-delta-epsilon/CHRNA1-CHRNB1-CHRND-CHRNE) and very low affinity to neuronal (alpha-7/CHRNA7) nicotinic acetylcholine receptor (nAChR). The chain is Weak toxin 3 from Bungarus candidus (Malayan krait).